Reading from the N-terminus, the 240-residue chain is Nuclear receptor-interacting protein 3 (240 aa).

This Mus musculus (Mouse) protein is Nuclear receptor-interacting protein 3 (Nrip3).